Consider the following 124-residue polypeptide: MAFKVVVSDSKTGKSYQFETESTALIGKKIGDEISGSVVELEGYKLKITGGSDKCGFAMRHDIHGAMKMRVLLKSGPGYNVKEKGLRRRKSLRGNTISKDITLINTKVVEYGSAPLGGEPESIE.

The protein belongs to the eukaryotic ribosomal protein eS6 family.

The sequence is that of Small ribosomal subunit protein eS6 from Methanococcus maripaludis (strain C5 / ATCC BAA-1333).